The chain runs to 139 residues: Putative pre-16S rRNA nuclease (139 aa).

It belongs to the YqgF nuclease family.

The protein localises to the cytoplasm. Could be a nuclease involved in processing of the 5'-end of pre-16S rRNA. The chain is Putative pre-16S rRNA nuclease from Streptococcus pyogenes serotype M3 (strain ATCC BAA-595 / MGAS315).